We begin with the raw amino-acid sequence, 117 residues long: NADH-ubiquinone oxidoreductase chain 3 (117 aa).

The next 3 membrane-spanning stretches (helical) occupy residues I2 to L22, F56 to V76, and S85 to Y105.

The protein belongs to the complex I subunit 3 family.

The protein localises to the mitochondrion membrane. It carries out the reaction a ubiquinone + NADH + 5 H(+)(in) = a ubiquinol + NAD(+) + 4 H(+)(out). Functionally, core subunit of the mitochondrial membrane respiratory chain NADH dehydrogenase (Complex I) that is believed to belong to the minimal assembly required for catalysis. Complex I functions in the transfer of electrons from NADH to the respiratory chain. The immediate electron acceptor for the enzyme is believed to be ubiquinone. The sequence is that of NADH-ubiquinone oxidoreductase chain 3 (ND3) from Albinaria caerulea (Land snail).